The following is a 344-amino-acid chain: MEWVEIDGSYGEGGGQILRTAVALSVITGKPVRIHRIRANRPNPGLRPQHLHGILALKELSNARVKGAKVGSTVLEFVPGRAEPKHVKVPIKTAGSITLVLQALLPAMAFIGGSFEITGGTDVPWSPPVDYLRNVTLFALEKMGLRAEIELKRRGHYPKGGGLVTGSVEPWESKKPLVALEWNKVDSFAGISHATNLPAHVAERQAKSAEERLREFFNAPVEIETEVSRSLGPGSGIVVWAETDSLRLAGDALGKRGKPAEVVGREAAEELIEQLTPRKAVDRFLGDQLIPFLAFAGGEIGVAEITNHLVTNVWVVERFLGRTFEVEGEIGEPGVVRVVRKAEV.

Residues Q102 and 284–288 (FLGDQ) each bind ATP. H308 (tele-AMP-histidine intermediate) is an active-site residue.

This sequence belongs to the RNA 3'-terminal cyclase family. Type 1 subfamily.

It localises to the cytoplasm. It catalyses the reaction a 3'-end 3'-phospho-ribonucleotide-RNA + ATP = a 3'-end 2',3'-cyclophospho-ribonucleotide-RNA + AMP + diphosphate. Its function is as follows. Catalyzes the conversion of 3'-phosphate to a 2',3'-cyclic phosphodiester at the end of RNA. The mechanism of action of the enzyme occurs in 3 steps: (A) adenylation of the enzyme by ATP; (B) transfer of adenylate to an RNA-N3'P to produce RNA-N3'PP5'A; (C) and attack of the adjacent 2'-hydroxyl on the 3'-phosphorus in the diester linkage to produce the cyclic end product. The biological role of this enzyme is unknown but it is likely to function in some aspects of cellular RNA processing. In Thermococcus gammatolerans (strain DSM 15229 / JCM 11827 / EJ3), this protein is RNA 3'-terminal phosphate cyclase.